We begin with the raw amino-acid sequence, 911 residues long: General transcription factor 3C polypeptide 2 (911 aa).

2 disordered regions span residues 24-187 and 205-297; these read DSPG…RRRA and ALPA…MAPN. A compositionally biased stretch (polar residues) spans 35–46; sequence DVKTSSEMTSAE. Serine 63 carries the post-translational modification Phosphoserine. Basic and acidic residues predominate over residues 64–81; the sequence is PDQRRLPPEQESLSRLEQ. Residues 92–112 show a composition bias toward basic residues; that stretch reads SKPRASKPGRKRGGRTRKGPK. Pro residues predominate over residues 114-123; the sequence is PQQPNPPSAP. Phosphoserine occurs at positions 132, 165, 167, 220, and 260. Residues 253–262 are compositionally biased toward acidic residues; sequence EAEDVEESEG. A compositionally biased stretch (low complexity) spans 263-277; it reads PSESSSEPEPVVPRS. 6 WD repeats span residues 366 to 426, 427 to 483, 484 to 535, 536 to 603, 604 to 654, and 655 to 690; these read PEDG…MNET, HPLS…AWEL, PGTP…IYKV, QCVA…SLKL, YPFQ…NSIK, and RFLS…HYID. Serine 597 is subject to Phosphoserine. Positions 765–785 are disordered; it reads SPEGPDHSSASSGVPNPPKAR. Phosphoserine is present on residues serine 871, serine 892, and serine 893. Residues 889 to 911 form a disordered region; it reads FQPSSPTRRPGFSPTSHRLLPTP. A Phosphothreonine modification is found at threonine 895. The residue at position 901 (serine 901) is a Phosphoserine.

Part of the TFIIIC subcomplex TFIIIC2, consisting of six subunits, GTF3C1, GTF3C2, GTF3C3, GTF3C4, GTF3C5 and GTF3C6.

The protein localises to the nucleus. Required for RNA polymerase III-mediated transcription. Component of TFIIIC that initiates transcription complex assembly on tRNA and is required for transcription of 5S rRNA and other stable nuclear and cytoplasmic RNAs. May play a direct role in stabilizing interactions of TFIIIC2 with TFIIIC1. This chain is General transcription factor 3C polypeptide 2 (GTF3C2), found in Homo sapiens (Human).